We begin with the raw amino-acid sequence, 330 residues long: Peptide transport system ATP-binding protein SapD (330 aa).

The region spanning 6 to 259 (IRNLTIEFKT…PHHPYTQALI (254 aa)) is the ABC transporter domain. An ATP-binding site is contributed by 40-47 (GESGSGKS).

It belongs to the ABC transporter superfamily.

It localises to the cell inner membrane. In terms of biological role, involved in a peptide intake transport system that plays a role in the resistance to antimicrobial peptides. The sequence is that of Peptide transport system ATP-binding protein SapD (sapD) from Escherichia coli O157:H7.